The chain runs to 91 residues: uncharacterized protein (91 aa).

Residues 71–91 (EANDRPSKKCGSGNLRVEKLV) form a disordered region.

This is an uncharacterized protein from Archaeoglobus fulgidus (strain ATCC 49558 / DSM 4304 / JCM 9628 / NBRC 100126 / VC-16).